Reading from the N-terminus, the 262-residue chain is Intron-encoded DNA endonuclease ai2b (262 aa).

This sequence belongs to the LAGLIDADG endonuclease family.

Its subcellular location is the mitochondrion. Functionally, mitochondrial DNA endonuclease involved in intron homing. The protein is Intron-encoded DNA endonuclease ai2b (ai2b) of Dictyostelium discoideum (Social amoeba).